The following is a 593-amino-acid chain: Transcription factor ATEG_07667 (593 aa).

Positions 18–47 (CTQCYKAKCRCVRTPSGDTCERCIRLKKRC) form a DNA-binding region, zn(2)-C6 fungal-type.

It is found in the nucleus. Transcriptional regulator that regulates both the azasperpyranone A biosynthesis clusters A and B. Specifically up-regulates the expression of the cluster A and B specific transcription factors ATEG_03638 and ATEG_07666, which in turn activate the expression of their respective clusters. This Aspergillus terreus (strain NIH 2624 / FGSC A1156) protein is Transcription factor ATEG_07667.